A 450-amino-acid polypeptide reads, in one-letter code: Tubulin alpha chain (450 aa).

Gln11 contacts GTP. N6-acetyllysine is present on Lys40. Residues Glu71, Ser140, Gly144, Thr145, Thr179, Asn206, and Asn228 each contribute to the GTP site. Mg(2+) is bound at residue Glu71. Residue Glu254 is part of the active site. The segment at 431-450 (DYEEVGTDSVGEEDEEGEEY) is disordered.

This sequence belongs to the tubulin family. As to quaternary structure, dimer of alpha and beta chains. A typical microtubule is a hollow water-filled tube with an outer diameter of 25 nm and an inner diameter of 15 nM. Alpha-beta heterodimers associate head-to-tail to form protofilaments running lengthwise along the microtubule wall with the beta-tubulin subunit facing the microtubule plus end conferring a structural polarity. Microtubules usually have 13 protofilaments but different protofilament numbers can be found in some organisms and specialized cells. Mg(2+) serves as cofactor. In terms of processing, some glutamate residues at the C-terminus are polyglycylated, resulting in polyglycine chains on the gamma-carboxyl group. Glycylation is mainly limited to tubulin incorporated into axonemes (cilia and flagella) whereas glutamylation is prevalent in neuronal cells, centrioles, axonemes, and the mitotic spindle. Both modifications can coexist on the same protein on adjacent residues, and lowering polyglycylation levels increases polyglutamylation, and reciprocally. The precise function of polyglycylation is still unclear. Post-translationally, some glutamate residues at the C-terminus are polyglutamylated, resulting in polyglutamate chains on the gamma-carboxyl group. Polyglutamylation plays a key role in microtubule severing by spastin (SPAST). SPAST preferentially recognizes and acts on microtubules decorated with short polyglutamate tails: severing activity by SPAST increases as the number of glutamates per tubulin rises from one to eight, but decreases beyond this glutamylation threshold. Acetylation of alpha chains at Lys-40 is located inside the microtubule lumen. This modification has been correlated with increased microtubule stability, intracellular transport and ciliary assembly. In terms of processing, undergoes a tyrosination/detyrosination cycle, the cyclic removal and re-addition of a C-terminal tyrosine residue by the enzymes tubulin tyrosine carboxypeptidase (MATCAP, VASH1 or VASH2) and tubulin tyrosine ligase (TTL), respectively. Post-translationally, tyrosination promotes microtubule interaction with CAP-Gly microtubule plus-end tracking proteins. Tyrosinated tubulins regulate the initiation of dynein-driven motility. Detyrosination is involved in metaphase plate congression by guiding chromosomes during mitosis. Detyrosination increases microtubules-dependent mechanotransduction in dystrophic cardiac and skeletal muscle. In cardiomyocytes, detyrosinated microtubules are required to resist to contractile compression during contraction.

It localises to the cytoplasm. The protein localises to the cytoskeleton. It catalyses the reaction GTP + H2O = GDP + phosphate + H(+). Tubulin is the major constituent of microtubules, a cylinder consisting of laterally associated linear protofilaments composed of alpha- and beta-tubulin heterodimers. Microtubules grow by the addition of GTP-tubulin dimers to the microtubule end, where a stabilizing cap forms. Below the cap, tubulin dimers are in GDP-bound state, owing to GTPase activity of alpha-tubulin. This Oncorhynchus keta (Chum salmon) protein is Tubulin alpha chain.